The primary structure comprises 249 residues: Leucyl/phenylalanyl-tRNA--protein transferase (249 aa).

The protein belongs to the L/F-transferase family.

The protein localises to the cytoplasm. The catalysed reaction is N-terminal L-lysyl-[protein] + L-leucyl-tRNA(Leu) = N-terminal L-leucyl-L-lysyl-[protein] + tRNA(Leu) + H(+). It catalyses the reaction N-terminal L-arginyl-[protein] + L-leucyl-tRNA(Leu) = N-terminal L-leucyl-L-arginyl-[protein] + tRNA(Leu) + H(+). It carries out the reaction L-phenylalanyl-tRNA(Phe) + an N-terminal L-alpha-aminoacyl-[protein] = an N-terminal L-phenylalanyl-L-alpha-aminoacyl-[protein] + tRNA(Phe). Functionally, functions in the N-end rule pathway of protein degradation where it conjugates Leu, Phe and, less efficiently, Met from aminoacyl-tRNAs to the N-termini of proteins containing an N-terminal arginine or lysine. The chain is Leucyl/phenylalanyl-tRNA--protein transferase from Xanthomonas axonopodis pv. citri (strain 306).